A 617-amino-acid chain; its full sequence is Zinc metalloproteinase nas-36 (617 aa).

The N-terminal stretch at 1–22 is a signal peptide; sequence MRLCHSIILFNSLISISICSKA. A propeptide spanning residues 23–126 is cleaved from the precursor; it reads DDPALLVASE…SKDKTKRLRR (104 aa). A Peptidase M12A domain is found at 127–322; sequence SFVSDKTATW…VATINTAYCK (196 aa). Intrachain disulfides connect Cys169–Cys321, Cys192–Cys211, Cys325–Cys346, Cys348–Cys357, Cys368–Cys397, Cys425–Cys445, Cys519–Cys550, Cys523–Cys555, and Cys535–Cys540. Asn174 is a glycosylation site (N-linked (GlcNAc...) asparagine). Position 219 (His219) interacts with Zn(2+). Glu220 is an active-site residue. Positions 223 and 229 each coordinate Zn(2+). The region spanning 317 to 358 is the EGF-like domain; that stretch reads NTAYCKDECKSEKTKCENGGYMRPSKCSECLCPDGLGGEKCE. The 115-residue stretch at 368-482 folds into the CUB domain; that stretch reads CGGIIKLTEE…IGFKIQAKST (115 aa). Positions 507-556 constitute a TSP type-1 domain; sequence PNVWADWGEWSMCSRTCGGCGIRSRVRSCRSKKCEGRRQEFGTCNLKACP.

Zn(2+) is required as a cofactor. Expressed in hypodermal cells. Also detected in the hypodermal seam cells in L4 larvae and young adults. In old adult hermaphrodites, it localizes to the vulva (at protein level).

It localises to the secreted. Its function is as follows. Metalloprotease. Involved in molting, a process during larval stages in which a new cuticle is formed and the old cuticle is shed. This Caenorhabditis elegans protein is Zinc metalloproteinase nas-36 (nas-36).